Consider the following 420-residue polypeptide: Gamma-glutamyl phosphate reductase (420 aa).

Belongs to the gamma-glutamyl phosphate reductase family.

It is found in the cytoplasm. It carries out the reaction L-glutamate 5-semialdehyde + phosphate + NADP(+) = L-glutamyl 5-phosphate + NADPH + H(+). Its pathway is amino-acid biosynthesis; L-proline biosynthesis; L-glutamate 5-semialdehyde from L-glutamate: step 2/2. In terms of biological role, catalyzes the NADPH-dependent reduction of L-glutamate 5-phosphate into L-glutamate 5-semialdehyde and phosphate. The product spontaneously undergoes cyclization to form 1-pyrroline-5-carboxylate. This Cereibacter sphaeroides (strain ATCC 17023 / DSM 158 / JCM 6121 / CCUG 31486 / LMG 2827 / NBRC 12203 / NCIMB 8253 / ATH 2.4.1.) (Rhodobacter sphaeroides) protein is Gamma-glutamyl phosphate reductase.